The chain runs to 361 residues: Microtubule-associated protein Jupiter (361 aa).

The segment covering 1 to 15 has biased composition (polar residues); the sequence is MISNYDITDSKSSSK. Disordered regions lie at residues 1–38 and 70–99; these read MISN…TPRN and IGDN…TPGK. At Ser-24 the chain carries Phosphoserine. At Thr-35 the chain carries Phosphothreonine. The segment covering 73 to 87 has biased composition (basic and acidic residues); it reads NPRRGQKPVDSHSRL. Residue Thr-96 is modified to Phosphothreonine. A Phosphoserine modification is found at Ser-105. Composition is skewed to low complexity over residues 125–134 and 141–154; these read GSSTANTTNG and SGSV…VSSS. Disordered stretches follow at residues 125–165 and 328–361; these read GSST…SGSR and GSTN…SGLW. A phosphoserine mark is found at Ser-143 and Ser-154. Residues 155 to 165 are compositionally biased toward polar residues; the sequence is TENLKMNSGSR.

Belongs to the MAP Jupiter family.

The protein localises to the nucleus. It localises to the cytoplasm. It is found in the cytoskeleton. The protein resides in the spindle. Binds to all microtubule populations. This chain is Microtubule-associated protein Jupiter, found in Drosophila persimilis (Fruit fly).